The sequence spans 686 residues: Methionine--tRNA ligase (686 aa).

Positions 15 to 25 (PYANGSIHLGH) match the 'HIGH' region motif. Residues Cys-146, Cys-149, Cys-159, and Cys-162 each contribute to the Zn(2+) site. The 'KMSKS' region signature appears at 332–336 (KMSKS). Residue Lys-335 coordinates ATP. The tRNA-binding domain maps to 585 to 686 (AFAAVDMRIA…EGAQPGMRVM (102 aa)).

The protein belongs to the class-I aminoacyl-tRNA synthetase family. MetG type 1 subfamily. In terms of assembly, homodimer. Requires Zn(2+) as cofactor.

The protein localises to the cytoplasm. The catalysed reaction is tRNA(Met) + L-methionine + ATP = L-methionyl-tRNA(Met) + AMP + diphosphate. In terms of biological role, is required not only for elongation of protein synthesis but also for the initiation of all mRNA translation through initiator tRNA(fMet) aminoacylation. In Vibrio campbellii (strain ATCC BAA-1116), this protein is Methionine--tRNA ligase.